The chain runs to 65 residues: MAKRCEICGKGPVAGKNVSHSNRHTRRMFRPNLQKIRVITEDGTVRTMRVCTRCLKAGKVQKATA.

Belongs to the bacterial ribosomal protein bL28 family.

The polypeptide is Large ribosomal subunit protein bL28 (Pseudothermotoga lettingae (strain ATCC BAA-301 / DSM 14385 / NBRC 107922 / TMO) (Thermotoga lettingae)).